The sequence spans 224 residues: MASNQNQASYHAGETKARNEEKTGQVMGATKDKAGQTTEATKQKAGETTEATKQKAAETTEAAKQKASETAEATKQKAAEAKDKTAQTAQAAKEKTYETAQSAKERAAQGKDQTASTLGEKTEAAKQKAAETTEAARQKAAEATEAAKQKASETAQYTKESAVTGKDKTGSVLQQAGETVVNAVVGAKDAVANTLGMGGDNTITTKDNTTGATTKDTTTTTRNH.

Disordered stretches follow at residues 1–169 (MASN…KDKT) and 193–224 (NTLG…TRNH). A compositionally biased stretch (basic and acidic residues) spans 13–23 (GETKARNEEKT). Repeat copies occupy residues 26 to 36 (VMGATKDKAGQ), 37 to 47 (TTEATKQKAGE), 48 to 58 (TTEATKQKAAE), 59 to 69 (TTEAAKQKASE), and 70 to 80 (TAEATKQKAAE). Residues 26-153 (VMGATKDKAG…TEAAKQKASE (128 aa)) form a 12 X 11 AA tandem repeats region. 3 stretches are compositionally biased toward basic and acidic residues: residues 41-85 (TKQK…KDKT), 92-109 (AKEK…RAAQ), and 120-151 (EKTE…KQKA). The 6; truncated repeat unit spans residues 81 to 87 (AKDKTAQ). 5 tandem repeats follow at residues 88 to 98 (TAQAAKEKTYE), 99 to 109 (TAQSAKERAAQ), 121 to 131 (KTEAAKQKAAE), 132 to 142 (TTEAARQKAAE), and 143 to 153 (ATEAAKQKASE). The segment covering 200–224 (DNTITTKDNTTGATTKDTTTTTRNH) has biased composition (low complexity).

The protein belongs to the LEA type 4 family.

The chain is Late embryogenesis abundant protein, group 3 from Triticum aestivum (Wheat).